A 162-amino-acid polypeptide reads, in one-letter code: Glycine cleavage system H protein, mitochondrial (162 aa).

A mitochondrion-targeting transit peptide spans 1-31 (MALRIWASSTANALRLSSATRPHFSPLSRCF). Residues 53 to 135 (VATIGITDHA…YEDGWMIKVK (83 aa)) enclose the Lipoyl-binding domain. Position 94 is an N6-lipoyllysine (Lys-94).

It belongs to the GcvH family. The glycine cleavage system is composed of four proteins: P, T, L and H. (R)-lipoate serves as cofactor.

It localises to the mitochondrion. Functionally, the glycine cleavage system catalyzes the degradation of glycine. The H protein shuttles the methylamine group of glycine from the P protein to the T protein. This Flaveria pringlei protein is Glycine cleavage system H protein, mitochondrial (GDCSH).